Reading from the N-terminus, the 421-residue chain is UDP-N-acetylglucosamine 1-carboxyvinyltransferase (421 aa).

22-23 lines the phosphoenolpyruvate pocket; that stretch reads KN. Arg-93 is a UDP-N-acetyl-alpha-D-glucosamine binding site. The Proton donor role is filled by Cys-117. Cys-117 bears the 2-(S-cysteinyl)pyruvic acid O-phosphothioketal mark. Residues 122–126, Asp-308, and Ile-330 each bind UDP-N-acetyl-alpha-D-glucosamine; that span reads RPVDL.

It belongs to the EPSP synthase family. MurA subfamily.

The protein resides in the cytoplasm. The enzyme catalyses phosphoenolpyruvate + UDP-N-acetyl-alpha-D-glucosamine = UDP-N-acetyl-3-O-(1-carboxyvinyl)-alpha-D-glucosamine + phosphate. The protein operates within cell wall biogenesis; peptidoglycan biosynthesis. Cell wall formation. Adds enolpyruvyl to UDP-N-acetylglucosamine. The polypeptide is UDP-N-acetylglucosamine 1-carboxyvinyltransferase (Pseudomonas putida (strain W619)).